The chain runs to 130 residues: Secreted RxLR effector protein 68 (130 aa).

Residues 1–29 form the signal peptide; the sequence is MRCVCASIRRTRIIEFLMFFALSSSTASC. N36 is a glycosylation site (N-linked (GlcNAc...) asparagine). The short motif at 45–48 is the RxLR element; sequence RWLR.

It belongs to the RxLR effector family.

It localises to the secreted. Its subcellular location is the host cytoplasm. The protein localises to the host nucleus. In terms of biological role, effector that acts as a broad suppressor of cell death to interrupt plant immunity. Inhibits cell death induced by cell death-inducing proteins, including the PAMP elicitor INF1 from P.infestans. This Plasmopara viticola (Downy mildew of grapevine) protein is Secreted RxLR effector protein 68.